A 309-amino-acid polypeptide reads, in one-letter code: Elongation factor Ts (309 aa).

An involved in Mg(2+) ion dislocation from EF-Tu region spans residues 80 to 83 (TDFV).

The protein belongs to the EF-Ts family.

Its subcellular location is the cytoplasm. Associates with the EF-Tu.GDP complex and induces the exchange of GDP to GTP. It remains bound to the aminoacyl-tRNA.EF-Tu.GTP complex up to the GTP hydrolysis stage on the ribosome. This Rhodospirillum rubrum (strain ATCC 11170 / ATH 1.1.1 / DSM 467 / LMG 4362 / NCIMB 8255 / S1) protein is Elongation factor Ts.